A 307-amino-acid chain; its full sequence is Putative oxidoreductase YceM (307 aa).

This sequence belongs to the Gfo/Idh/MocA family.

In Salmonella typhimurium (strain LT2 / SGSC1412 / ATCC 700720), this protein is Putative oxidoreductase YceM (yceM).